The following is a 378-amino-acid chain: 7-methylxanthine methyltransferase 1 (378 aa).

The S-adenosyl-L-homocysteine site is built by Tyr18, Cys61, Asn66, Asp100, Leu101, Ser139, Phe140, and Cys156. Theobromine contacts are provided by Tyr157, His160, and Trp161. Asn178, Asp260, Phe262, and Asn263 together coordinate Mg(2+). Tyr362 is a binding site for theobromine.

This sequence belongs to the methyltransferase superfamily. Type-7 methyltransferase family. Requires Mg(2+) as cofactor. Mainly expressed, at low levels, in leaves and fruits (grains). Also present, at lower levels, in roots, stamens and pistils.

It localises to the cytoplasm. It catalyses the reaction 7-methylxanthine + S-adenosyl-L-methionine = theobromine + S-adenosyl-L-homocysteine + H(+). It functions in the pathway alkaloid biosynthesis. Involved in the biosynthesis of caffeine. Catalyzes the conversion of 7-methylxanthine (7mX) to theobromine and of paraxanthine to caffeine. The protein is 7-methylxanthine methyltransferase 1 of Coffea canephora (Robusta coffee).